The chain runs to 490 residues: Auxin transporter-like protein 5 (490 aa).

Topologically, residues 1 to 55 (MEMANDKVAETVIVGNYVEMESEGKPPQDIKSKLSNFLWHGGSAYDAWFSCASNQ) are cytoplasmic. The chain crosses the membrane as a helical span at residues 56 to 73 (VAQVLLTLPYSFSQLGML). The Extracellular segment spans residues 74-75 (SG). A helical transmembrane segment spans residues 76 to 96 (ILFQLFYGILGSWTAYLISIL). The Cytoplasmic segment spans residues 97 to 132 (YVEYRTRKEREKVNFRSHVIQWFEVLDGLLGKHWRN). A helical transmembrane segment spans residues 133–153 (VGLGFNCTFLLFGSVIQLIAC). Residues 154–168 (ASNIYYINDNLDKRT) are Extracellular-facing. The chain crosses the membrane as a helical span at residues 169-189 (WTYIFGACCATTVFIPSFHNY). A topological domain (cytoplasmic) is located at residue arginine 190. A helical membrane pass occupies residues 191-211 (IWSFLGLVMTTYTAWYLTIAA). At 212–227 (VLHGQVEGVKHSGPNK) the chain is on the extracellular side. The chain crosses the membrane as a helical span at residues 228–248 (IILYFTGATNILYTFGGHAVT). Residues 249-262 (VEIMHAMWKPQKFK) lie on the Cytoplasmic side of the membrane. Residues 263–283 (AIYLLATLYVLTLTIPSATAV) traverse the membrane as a helical segment. At 284-310 (YWAFGDMLLNHSNAFALLPKSPFRDMA) the chain is on the extracellular side. Asparagine 293 carries N-linked (GlcNAc...) asparagine glycosylation. A helical transmembrane segment spans residues 311-331 (VILMLIHQFITFGFACTPLYF). Over 332–352 (VWEKTVGMHECKSLCKRALVR) the chain is Cytoplasmic. The chain crosses the membrane as a helical span at residues 353-373 (LPVVIPIWFLAIIFPFFGPIN). Topologically, residues 374-376 (STV) are extracellular. Residues 377-397 (GSLLVSFTVYIIPALAHIFTF) traverse the membrane as a helical segment. Topologically, residues 398-420 (KSSSARQNAVEQPPKFVGRWVGT) are cytoplasmic. Residues 421-441 (FVINVFIVVWVLIVGFGFGGW) form a helical membrane-spanning segment. At 442–490 (ASMVNFVHQIDTFGLFTKCYQCPPPTPSVPTMPPHQMNATAPSPHHHHH) the chain is on the extracellular side. Asparagine 479 carries an N-linked (GlcNAc...) asparagine glycan.

Belongs to the amino acid/polyamine transporter 2 family. Amino acid/auxin permease (AAAP) (TC 2.A.18.1) subfamily. Shoots and roots of nodulating plants, at low levels.

Its subcellular location is the cell membrane. Its function is as follows. Carrier protein involved in proton-driven auxin influx. Mediates the formation of auxin gradient from developing leaves (site of auxin biosynthesis) to tips by contributing to the loading of auxin in vascular tissues and facilitating acropetal (base to tip) auxin transport within inner tissues of the root apex, and basipetal (tip to base) auxin transport within outer tissues of the root apex. May be involved in lateral roots and nodules formation. This Medicago truncatula (Barrel medic) protein is Auxin transporter-like protein 5 (LAX5).